The chain runs to 390 residues: Putative nickel insertion protein (390 aa).

It belongs to the LarC family.

The protein is Putative nickel insertion protein of Geobacter metallireducens (strain ATCC 53774 / DSM 7210 / GS-15).